Here is a 262-residue protein sequence, read N- to C-terminus: Phycoerythrobilin:ferredoxin oxidoreductase (262 aa).

It belongs to the HY2 family.

The catalysed reaction is (3Z)-phycoerythrobilin + oxidized 2[4Fe-4S]-[ferredoxin] = 15,16-dihydrobiliverdin + reduced 2[4Fe-4S]-[ferredoxin] + 2 H(+). In terms of biological role, catalyzes the two-electron reduction of the C2 and C3(1) diene system of 15,16-dihydrobiliverdin. This Parasynechococcus marenigrum (strain WH8102) protein is Phycoerythrobilin:ferredoxin oxidoreductase (pebB).